Reading from the N-terminus, the 331-residue chain is ADP-L-glycero-D-manno-heptose-6-epimerase (331 aa).

NADP(+)-binding positions include 11 to 12 (FI), 32 to 33 (DN), lysine 39, lysine 54, 75 to 79 (EGACS), and asparagine 92. The Proton acceptor role is filled by tyrosine 139. Lysine 143 contacts NADP(+). Residue asparagine 168 participates in substrate binding. Positions 169 and 177 each coordinate NADP(+). Lysine 177 functions as the Proton acceptor in the catalytic mechanism. Residues arginine 179, histidine 186, 200 to 203 (FGEY), arginine 213, and tyrosine 292 each bind substrate.

It belongs to the NAD(P)-dependent epimerase/dehydratase family. HldD subfamily. As to quaternary structure, homopentamer. Requires NADP(+) as cofactor.

It carries out the reaction ADP-D-glycero-beta-D-manno-heptose = ADP-L-glycero-beta-D-manno-heptose. It functions in the pathway nucleotide-sugar biosynthesis; ADP-L-glycero-beta-D-manno-heptose biosynthesis; ADP-L-glycero-beta-D-manno-heptose from D-glycero-beta-D-manno-heptose 7-phosphate: step 4/4. Functionally, catalyzes the interconversion between ADP-D-glycero-beta-D-manno-heptose and ADP-L-glycero-beta-D-manno-heptose via an epimerization at carbon 6 of the heptose. The sequence is that of ADP-L-glycero-D-manno-heptose-6-epimerase from Cupriavidus necator (strain ATCC 17699 / DSM 428 / KCTC 22496 / NCIMB 10442 / H16 / Stanier 337) (Ralstonia eutropha).